We begin with the raw amino-acid sequence, 357 residues long: DNA integrity scanning protein DisA (357 aa).

The 139-residue stretch at Arg3–Ser141 folds into the DAC domain. ATP contacts are provided by residues Gly70, Leu88, and Thr101 to Ser105.

This sequence belongs to the DisA family. In terms of assembly, homooctamer. The cofactor is Mg(2+).

It carries out the reaction 2 ATP = 3',3'-c-di-AMP + 2 diphosphate. Participates in a DNA-damage check-point. DisA forms globular foci that rapidly scan along the chromosomes searching for lesions. Functionally, also has diadenylate cyclase activity, catalyzing the condensation of 2 ATP molecules into cyclic di-AMP (c-di-AMP). c-di-AMP likely acts as a signaling molecule that may couple DNA integrity with a cellular process. This chain is DNA integrity scanning protein DisA, found in Mycolicibacterium paratuberculosis (strain ATCC BAA-968 / K-10) (Mycobacterium paratuberculosis).